We begin with the raw amino-acid sequence, 133 residues long: Ribosome-binding factor A (133 aa).

It belongs to the RbfA family. In terms of assembly, monomer. Binds 30S ribosomal subunits, but not 50S ribosomal subunits or 70S ribosomes.

Its subcellular location is the cytoplasm. Functionally, one of several proteins that assist in the late maturation steps of the functional core of the 30S ribosomal subunit. Associates with free 30S ribosomal subunits (but not with 30S subunits that are part of 70S ribosomes or polysomes). Required for efficient processing of 16S rRNA. May interact with the 5'-terminal helix region of 16S rRNA. In Bordetella bronchiseptica (strain ATCC BAA-588 / NCTC 13252 / RB50) (Alcaligenes bronchisepticus), this protein is Ribosome-binding factor A.